The sequence spans 350 residues: MFS transporter OpS2 (350 aa).

8 helical membrane passes run phenylalanine 3–leucine 23, glycine 34–leucine 54, tryptophan 65–threonine 85, phenylalanine 141–isoleucine 161, alanine 174–valine 194, methionine 227–tryptophan 247, isoleucine 253–phenylalanine 273, and proline 312–alanine 332.

It belongs to the major facilitator superfamily.

Its subcellular location is the cell membrane. Functionally, MFS transporter; part of the gene cluster that mediates the biosynthesis of the bibenzoquinone oosporein, a metabolite required for fungal virulence that acts by evading host immunity to facilitate fungal multiplication in insects. The function of this putative MFS transporter remains unclear since its deletion leads to increased oosporein production. The protein is MFS transporter OpS2 of Beauveria bassiana (strain ARSEF 2860) (White muscardine disease fungus).